Consider the following 298-residue polypeptide: N-acetylmuramic acid 6-phosphate etherase (298 aa).

In terms of domain architecture, SIS spans 54 to 217 (CISAIKNHGR…STVTMIKLGK (164 aa)). The active-site Proton donor is E82. The active site involves E113.

This sequence belongs to the GCKR-like family. MurNAc-6-P etherase subfamily. Homodimer.

The enzyme catalyses N-acetyl-D-muramate 6-phosphate + H2O = N-acetyl-D-glucosamine 6-phosphate + (R)-lactate. It functions in the pathway amino-sugar metabolism; N-acetylmuramate degradation. Specifically catalyzes the cleavage of the D-lactyl ether substituent of MurNAc 6-phosphate, producing GlcNAc 6-phosphate and D-lactate. This chain is N-acetylmuramic acid 6-phosphate etherase, found in Petrotoga mobilis (strain DSM 10674 / SJ95).